Consider the following 237-residue polypeptide: Class B acid phosphatase (237 aa).

Positions 1-23 (MRKTPLALSAVFLLLSLNQSAFA) are cleaved as a signal peptide. Asp-69 functions as the Nucleophile in the catalytic mechanism. The Mg(2+) site is built by Asp-69 and Asp-71. The active-site Proton donor is Asp-71. Residues 137-138 (TG) and Lys-177 each bind substrate. Asp-192 provides a ligand contact to Mg(2+).

Belongs to the class B bacterial acid phosphatase family. Homotetramer. It depends on Mg(2+) as a cofactor.

Its subcellular location is the periplasm. It carries out the reaction a phosphate monoester + H2O = an alcohol + phosphate. Functionally, dephosphorylates several organic phosphate monoesters. Also has a phosphotransferase activity catalyzing the transfer of low-energy phosphate groups from organic phosphate monoesters to free hydroxyl groups of various organic compounds. In Rahnella sp. (strain Y9602), this protein is Class B acid phosphatase.